Here is a 310-residue protein sequence, read N- to C-terminus: UDP-N-acetylenolpyruvoylglucosamine reductase (310 aa).

Residues lysine 27–alanine 192 form the FAD-binding PCMH-type domain. The active site involves arginine 171. The Proton donor role is filled by serine 223. Glutamate 293 is a catalytic residue.

This sequence belongs to the MurB family. It depends on FAD as a cofactor.

It is found in the cytoplasm. It carries out the reaction UDP-N-acetyl-alpha-D-muramate + NADP(+) = UDP-N-acetyl-3-O-(1-carboxyvinyl)-alpha-D-glucosamine + NADPH + H(+). Its pathway is cell wall biogenesis; peptidoglycan biosynthesis. Cell wall formation. This is UDP-N-acetylenolpyruvoylglucosamine reductase from Caldicellulosiruptor saccharolyticus (strain ATCC 43494 / DSM 8903 / Tp8T 6331).